Consider the following 1732-residue polypeptide: Lys-gingipain W83 (1732 aa).

Positions 1–24 (MRKLLLLIAASLLGVGLYAQSAKI) are cleaved as a signal peptide. Residues 25–228 (KLDAPTTRTT…ETAYKQLFNR (204 aa)) constitute a propeptide that is removed on maturation. Ca(2+) contacts are provided by Asp313, Asp337, Asp339, Phe341, and Glu343. His444 serves as the catalytic Proton donor. The active-site Nucleophile is Cys477. Ca(2+) is bound by residues Phe482 and Glu491. The tract at residues 965-988 (DAPNGTPNPNPNPNPNPGTTLSES) is disordered. A compositionally biased stretch (pro residues) spans 970–980 (TPNPNPNPNPN). Positions 988, 990, 1001, 1003, 1005, 1007, 1022, 1024, 1043, 1146, 1147, 1433, 1435, 1446, 1448, 1450, 1452, 1470, 1472, 1490, and 1595 each coordinate Ca(2+).

The protein belongs to the peptidase C25 family. Post-translationally, proteolytically cleaved into a catalytic subunit and three adhesins. Arg-gingipain is involved in this post-translational processing.

The protein resides in the secreted. The enzyme catalyses Endopeptidase with strict specificity for lysyl bonds.. Its function is as follows. Cysteine proteinase with a strong preference for substrates with Lys in the P1 position. Hydrolyzes bovine hemoglobin, bovine serum albumin, casein, human placental type I collagen and human IgA and IgG. Disrupts the functions of polymorphonuclear leukocytes. May act as a virulence factor in the development of peridontal disease. Involved in the coaggregation of P.gingivalis with other oral bacteria. Has hemolytic activity; this is mediated by the adhesin domains and does not require the catalytic domain. This is Lys-gingipain W83 from Porphyromonas gingivalis (Bacteroides gingivalis).